A 461-amino-acid polypeptide reads, in one-letter code: Serine carboxypeptidase-like 51 (461 aa).

The signal sequence occupies residues 1–20 (MKTTVVYLVILCLIVSCTNG). N99 and N152 each carry an N-linked (GlcNAc...) asparagine glycan. S166 is an active-site residue. N-linked (GlcNAc...) asparagine glycosylation occurs at N340. Active-site residues include D379 and H438.

The protein belongs to the peptidase S10 family. Expressed in seedlings, roots, flowers and siliques.

It is found in the secreted. Functionally, probable carboxypeptidase. This chain is Serine carboxypeptidase-like 51 (SCPL51), found in Arabidopsis thaliana (Mouse-ear cress).